The following is a 186-amino-acid chain: PQPQPQYSQPQQPISQQQQQQQQQQQQQQQEQQILQQILQQQLIPCMDVVLQQHNIAHGRSQVLQQSTYQLLQELCCQHLWQIPEQSQCQAIHNVVHAIILHQQQQKQQQQPSSQFSFQQPLQQYPLGQGSFRPSQQNPQAQGSVQPQQLPQFEIRNLALQTLPAMCNVYIPPYCTIAPFGIFGTN.

Residues 1-20 (PQPQPQYSQPQQPISQQQQQ) are disordered.

It belongs to the gliadin/glutenin family. In terms of processing, substrate of transglutaminase.

In terms of biological role, gliadin is the major seed storage protein in wheat. The polypeptide is Alpha/beta-gliadin clone PTO-A10 (Triticum aestivum (Wheat)).